The following is a 507-amino-acid chain: ATP synthase subunit alpha (507 aa).

169–176 (GDRQTGKT) lines the ATP pocket.

It belongs to the ATPase alpha/beta chains family. In terms of assembly, F-type ATPases have 2 components, CF(1) - the catalytic core - and CF(0) - the membrane proton channel. CF(1) has five subunits: alpha(3), beta(3), gamma(1), delta(1), epsilon(1). CF(0) has three main subunits: a(1), b(2) and c(9-12). The alpha and beta chains form an alternating ring which encloses part of the gamma chain. CF(1) is attached to CF(0) by a central stalk formed by the gamma and epsilon chains, while a peripheral stalk is formed by the delta and b chains. In this bacterium the a and b subunits are transcribed but do not seem to be translated, thus the ATP synthase consists of the alpha, beta, gamma, delta, epsilon and c subunits.

The protein localises to the cell membrane. It catalyses the reaction ATP + H2O + 4 H(+)(in) = ADP + phosphate + 5 H(+)(out). In terms of biological role, produces ATP from ADP in the presence of a proton gradient across the membrane. The alpha chain is a regulatory subunit. This chain is ATP synthase subunit alpha, found in Moorella thermoacetica (strain ATCC 39073 / JCM 9320).